Reading from the N-terminus, the 230-residue chain is Ribose-5-phosphate isomerase A (230 aa).

Substrate-binding positions include 28–31 (TGST), 83–86 (DGAD), and 97–100 (KGLG). Catalysis depends on E106, which acts as the Proton acceptor. A substrate-binding site is contributed by K124.

The protein belongs to the ribose 5-phosphate isomerase family. In terms of assembly, homodimer.

The catalysed reaction is aldehydo-D-ribose 5-phosphate = D-ribulose 5-phosphate. Its pathway is carbohydrate degradation; pentose phosphate pathway; D-ribose 5-phosphate from D-ribulose 5-phosphate (non-oxidative stage): step 1/1. Catalyzes the reversible conversion of ribose-5-phosphate to ribulose 5-phosphate. This Gloeobacter violaceus (strain ATCC 29082 / PCC 7421) protein is Ribose-5-phosphate isomerase A.